A 386-amino-acid polypeptide reads, in one-letter code: Succinyl-diaminopimelate desuccinylase (386 aa).

H73 provides a ligand contact to Zn(2+). D75 is an active-site residue. Residue D106 participates in Zn(2+) binding. The active-site Proton acceptor is E140. Zn(2+) is bound by residues E141, E169, and H355.

It belongs to the peptidase M20A family. DapE subfamily. Homodimer. It depends on Zn(2+) as a cofactor. Co(2+) serves as cofactor.

It catalyses the reaction N-succinyl-(2S,6S)-2,6-diaminopimelate + H2O = (2S,6S)-2,6-diaminopimelate + succinate. It participates in amino-acid biosynthesis; L-lysine biosynthesis via DAP pathway; LL-2,6-diaminopimelate from (S)-tetrahydrodipicolinate (succinylase route): step 3/3. In terms of biological role, catalyzes the hydrolysis of N-succinyl-L,L-diaminopimelic acid (SDAP), forming succinate and LL-2,6-diaminopimelate (DAP), an intermediate involved in the bacterial biosynthesis of lysine and meso-diaminopimelic acid, an essential component of bacterial cell walls. The protein is Succinyl-diaminopimelate desuccinylase of Delftia acidovorans (strain DSM 14801 / SPH-1).